We begin with the raw amino-acid sequence, 1186 residues long: Partner and localizer of BRCA2 (1186 aa).

Positions methionine 1–arginine 160 are required for its oligomerization and is important for its focal concentration at DNA damage sites. The interval methionine 1–leucine 200 is interaction with RAD51. Residues methionine 1–serine 319 are interaction with BRCA1. Residues methionine 1–alanine 579 form a DNA-binding (with the preference D loop &gt; dsDNA &gt; ssDNA) region. A coiled-coil region spans residues leucine 9–alanine 41. Disordered regions lie at residues valine 52–proline 72 and lysine 95–serine 157. Over residues arginine 120–glutamine 141 the composition is skewed to basic and acidic residues. A compositionally biased stretch (basic residues) spans leucine 143–lysine 152. Phosphoserine occurs at positions 172 and 190. The tract at residues threonine 252–leucine 273 is disordered. Serine 285 carries the post-translational modification Phosphoserine. The tract at residues lysine 346–arginine 365 is disordered. 2 positions are modified to phosphoserine: serine 376 and serine 387. The tract at residues serine 395–aspartate 446 is chAM (Chromatin-association motif); required for chromatin association, mediates nucleosome association. Positions phenylalanine 440–aspartate 525 are disordered. Position 454 is a phosphoserine (serine 454). Polar residues predominate over residues glycine 467 to serine 488. Serine 660 is modified (phosphoserine). Disordered regions lie at residues proline 679–leucine 698 and lysine 774–proline 798. Over residues proline 687 to leucine 698 the composition is skewed to polar residues. The interval glutamine 775–serine 1186 is required for interaction with POLH and POLH DNA synthesis stimulation. Residue serine 781 is modified to Phosphoserine. An interaction with RAD51, BRCA2 and POLH region spans residues glycine 853–serine 1186. WD repeat units follow at residues asparagine 854–alanine 915, valine 917–leucine 961, lysine 962–proline 1009, glutamate 1010–aspartate 1052, serine 1058–cysteine 1109, alanine 1115–proline 1153, and serine 1155–serine 1186.

As to quaternary structure, homooligomer; dissociated upon DNA damage thus allowing association with BRCA1. Oligomerization is essential for its focal accumulation at DNA breaks. Part of a BRCA complex containing BRCA1, BRCA2 and PALB2. Interacts with BRCA1 and this interaction is essential for its function in HRR. Interacts with RAD51AP1 and MORF4L1/MRG15. Component of the homologous recombination repair (HR) complex composed of ERCC5/XPG, BRCA2, PALB2, DSS1 and RAD51. Within the complex, interacts with ERCC5/XPG and BRCA2. Interacts with BRCA2, RAD51C, RAD51 and XRCC3; the interactions are direct and it may serve as a scaffold for a HR complex containing PALB2, BRCA2, RAD51C, RAD51 and XRCC3. Interacts with POLH; the interaction is direct.

The protein resides in the nucleus. In terms of biological role, plays a critical role in homologous recombination repair (HRR) through its ability to recruit BRCA2 and RAD51 to DNA breaks. Strongly stimulates the DNA strand-invasion activity of RAD51, stabilizes the nucleoprotein filament against a disruptive BRC3-BRC4 polypeptide and helps RAD51 to overcome the suppressive effect of replication protein A (RPA). Functionally cooperates with RAD51AP1 in promoting of D-loop formation by RAD51. Serves as the molecular scaffold in the formation of the BRCA1-PALB2-BRCA2 complex which is essential for homologous recombination. Via its WD repeats is proposed to scaffold a HR complex containing RAD51C and BRCA2 which is thought to play a role in HR-mediated DNA repair. Essential partner of BRCA2 that promotes the localization and stability of BRCA2. Also enables its recombinational repair and checkpoint functions of BRCA2. May act by promoting stable association of BRCA2 with nuclear structures, allowing BRCA2 to escape the effects of proteasome-mediated degradation. Binds DNA with high affinity for D loop, which comprises single-stranded, double-stranded and branched DNA structures. May play a role in the extension step after strand invasion at replication-dependent DNA double-strand breaks; together with BRCA2 is involved in both POLH localization at collapsed replication forks and DNA polymerization activity. This Homo sapiens (Human) protein is Partner and localizer of BRCA2 (PALB2).